A 67-amino-acid polypeptide reads, in one-letter code: ATP synthase protein 8 (67 aa).

The chain crosses the membrane as a helical span at residues 8–24 (TWSITIMSMIMTLFIVF). N6-acetyllysine; alternate is present on Lys54. Lys54 carries the N6-succinyllysine; alternate modification. Lys57 is modified (N6-acetyllysine).

This sequence belongs to the ATPase protein 8 family. In terms of assembly, F-type ATPases have 2 components, CF(1) - the catalytic core - and CF(0) - the membrane proton channel. Component of an ATP synthase complex composed of ATP5PB, ATP5MC1, ATP5F1E, ATP5PD, ATP5ME, ATP5PF, ATP5MF, MT-ATP6, MT-ATP8, ATP5F1A, ATP5F1B, ATP5F1D, ATP5F1C, ATP5PO, ATP5MG, ATP5MK and ATP5MJ. Interacts with PRICKLE3.

The protein resides in the mitochondrion membrane. In terms of biological role, mitochondrial membrane ATP synthase (F(1)F(0) ATP synthase or Complex V) produces ATP from ADP in the presence of a proton gradient across the membrane which is generated by electron transport complexes of the respiratory chain. F-type ATPases consist of two structural domains, F(1) - containing the extramembraneous catalytic core and F(0) - containing the membrane proton channel, linked together by a central stalk and a peripheral stalk. During catalysis, ATP synthesis in the catalytic domain of F(1) is coupled via a rotary mechanism of the central stalk subunits to proton translocation. Part of the complex F(0) domain. Minor subunit located with subunit a in the membrane. This Felis silvestris lybica (African wildcat) protein is ATP synthase protein 8 (MT-ATP8).